The following is a 136-amino-acid chain: MTGGKSAGGKAGTTKNAQSRSSKAGLAFPVGRVHRLLRKGNYAQRVGAGAPVYLAAVLEYLAAEILELAGNAARDNKKTRIIPRHLQLAIRNDEELNKLLGHVTIAQGGVLPNIHQNLLPKKTAKTAGGKPASQEL.

A compositionally biased stretch (gly residues) spans 1–11 (MTGGKSAGGKA). The segment at 1-23 (MTGGKSAGGKAGTTKNAQSRSSK) is disordered. 2 positions are modified to N6-acetyllysine: Lys-5 and Lys-10. Gln-107 carries the post-translational modification N5-methylglutamine. Ser-133 is modified (phosphoserine). Positions 133–134 (SQ) match the [ST]-Q motif motif.

Belongs to the histone H2A family. As to quaternary structure, the nucleosome is a histone octamer containing two molecules each of H2A, H2B, H3 and H4 assembled in one H3-H4 heterotetramer and two H2A-H2B heterodimers. The octamer wraps approximately 147 bp of DNA. Phosphorylated to form H2AS128ph (gamma-H2A) in response to DNA double-strand breaks (DSBs) generated by exogenous genotoxic agents and by stalled replication forks. Phosphorylation is dependent on the DNA damage checkpoint kinases MEC1/ATR and TEL1/ATM, spreads on either side of a detected DSB site and may mark the surrounding chromatin for recruitment of proteins required for DNA damage signaling and repair. Gamma-H2A is removed from the DNA prior to the strand invasion-primer extension step of the repair process and subsequently dephosphorylated. Dephosphorylation is necessary for efficient recovery from the DNA damage checkpoint. In terms of processing, acetylated by ESA1 to form H2AK4ac and H2AK7ac.

The protein localises to the nucleus. It is found in the chromosome. Its function is as follows. Core component of nucleosome which plays a central role in DNA double strand break (DSB) repair. Nucleosomes wrap and compact DNA into chromatin, limiting DNA accessibility to the cellular machineries which require DNA as a template. Histones thereby play a central role in transcription regulation, DNA repair, DNA replication and chromosomal stability. DNA accessibility is regulated via a complex set of post-translational modifications of histones, also called histone code, and nucleosome remodeling. This chain is Histone H2A (hta1), found in Botryotinia fuckeliana (strain B05.10) (Noble rot fungus).